Here is a 297-residue protein sequence, read N- to C-terminus: UDP-N-acetylenolpyruvoylglucosamine reductase (297 aa).

Positions 26-191 (QTGGPAEYLA…IAATFALKAG (166 aa)) constitute an FAD-binding PCMH-type domain. Residue Arg170 is part of the active site. Ser220 functions as the Proton donor in the catalytic mechanism. Glu290 is a catalytic residue.

Belongs to the MurB family. Requires FAD as cofactor.

The protein resides in the cytoplasm. It catalyses the reaction UDP-N-acetyl-alpha-D-muramate + NADP(+) = UDP-N-acetyl-3-O-(1-carboxyvinyl)-alpha-D-glucosamine + NADPH + H(+). It functions in the pathway cell wall biogenesis; peptidoglycan biosynthesis. Its function is as follows. Cell wall formation. The polypeptide is UDP-N-acetylenolpyruvoylglucosamine reductase (Lactobacillus delbrueckii subsp. bulgaricus (strain ATCC 11842 / DSM 20081 / BCRC 10696 / JCM 1002 / NBRC 13953 / NCIMB 11778 / NCTC 12712 / WDCM 00102 / Lb 14)).